A 178-amino-acid chain; its full sequence is ATP synthase subunit delta (178 aa).

The protein belongs to the ATPase delta chain family. F-type ATPases have 2 components, F(1) - the catalytic core - and F(0) - the membrane proton channel. F(1) has five subunits: alpha(3), beta(3), gamma(1), delta(1), epsilon(1). F(0) has three main subunits: a(1), b(2) and c(10-14). The alpha and beta chains form an alternating ring which encloses part of the gamma chain. F(1) is attached to F(0) by a central stalk formed by the gamma and epsilon chains, while a peripheral stalk is formed by the delta and b chains.

The protein resides in the cell membrane. F(1)F(0) ATP synthase produces ATP from ADP in the presence of a proton or sodium gradient. F-type ATPases consist of two structural domains, F(1) containing the extramembraneous catalytic core and F(0) containing the membrane proton channel, linked together by a central stalk and a peripheral stalk. During catalysis, ATP synthesis in the catalytic domain of F(1) is coupled via a rotary mechanism of the central stalk subunits to proton translocation. In terms of biological role, this protein is part of the stalk that links CF(0) to CF(1). It either transmits conformational changes from CF(0) to CF(1) or is implicated in proton conduction. This chain is ATP synthase subunit delta, found in Streptococcus thermophilus (strain ATCC BAA-250 / LMG 18311).